The sequence spans 447 residues: Tubulin beta chain (447 aa).

The GTP site is built by Gln11, Glu69, Ser138, Gly142, Thr143, Gly144, Asn204, and Asn226. Glu69 is a Mg(2+) binding site. A disordered region spans residues 425–447 (YQDASISEGEEEYEEEVPIEGEE). The segment covering 432–447 (EGEEEYEEEVPIEGEE) has biased composition (acidic residues).

Belongs to the tubulin family. In terms of assembly, dimer of alpha and beta chains. A typical microtubule is a hollow water-filled tube with an outer diameter of 25 nm and an inner diameter of 15 nM. Alpha-beta heterodimers associate head-to-tail to form protofilaments running lengthwise along the microtubule wall with the beta-tubulin subunit facing the microtubule plus end conferring a structural polarity. Microtubules usually have 13 protofilaments but different protofilament numbers can be found in some organisms and specialized cells. Mg(2+) is required as a cofactor.

The protein localises to the cytoplasm. Its subcellular location is the cytoskeleton. Functionally, tubulin is the major constituent of microtubules, a cylinder consisting of laterally associated linear protofilaments composed of alpha- and beta-tubulin heterodimers. Microtubules grow by the addition of GTP-tubulin dimers to the microtubule end, where a stabilizing cap forms. Below the cap, tubulin dimers are in GDP-bound state, owing to GTPase activity of alpha-tubulin. This chain is Tubulin beta chain (tubA), found in Botryotinia fuckeliana (Noble rot fungus).